Consider the following 388-residue polypeptide: Chorismate synthase (388 aa).

2 residues coordinate NADP(+): Arg-39 and Arg-45. Residues 130 to 132 (RSS), 251 to 252 (NA), Gly-296, 311 to 315 (KPIPT), and Arg-337 each bind FMN.

The protein belongs to the chorismate synthase family. Homotetramer. FMNH2 serves as cofactor.

It catalyses the reaction 5-O-(1-carboxyvinyl)-3-phosphoshikimate = chorismate + phosphate. It functions in the pathway metabolic intermediate biosynthesis; chorismate biosynthesis; chorismate from D-erythrose 4-phosphate and phosphoenolpyruvate: step 7/7. Functionally, catalyzes the anti-1,4-elimination of the C-3 phosphate and the C-6 proR hydrogen from 5-enolpyruvylshikimate-3-phosphate (EPSP) to yield chorismate, which is the branch point compound that serves as the starting substrate for the three terminal pathways of aromatic amino acid biosynthesis. This reaction introduces a second double bond into the aromatic ring system. The polypeptide is Chorismate synthase (Streptococcus pyogenes serotype M6 (strain ATCC BAA-946 / MGAS10394)).